The primary structure comprises 331 residues: Phenylalanine--tRNA ligase alpha subunit (331 aa).

A Mg(2+)-binding site is contributed by glutamate 252.

The protein belongs to the class-II aminoacyl-tRNA synthetase family. Phe-tRNA synthetase alpha subunit type 1 subfamily. Tetramer of two alpha and two beta subunits. Mg(2+) is required as a cofactor.

The protein localises to the cytoplasm. The catalysed reaction is tRNA(Phe) + L-phenylalanine + ATP = L-phenylalanyl-tRNA(Phe) + AMP + diphosphate + H(+). The protein is Phenylalanine--tRNA ligase alpha subunit of Stenotrophomonas maltophilia (strain R551-3).